The following is a 160-amino-acid chain: KGPLGHIEYTGKGNFIAHGEPKFARRLAMLAGGTGITPIYQVIQAVLKDPDDRTEMFFAVYSNKTESDILLREELDAWAKKHSDRFKVWYVVDKAGNDWAFSTGRVNESIMRVHLPGPSDALALACGPPPINSAYGWQPSLENIGYKKDDVPVFMATTQS.

T37 is a binding site for FAD.

Belongs to the nitrate reductase family. In terms of assembly, homodimer. FAD serves as cofactor. It depends on heme as a cofactor. The cofactor is Mo-molybdopterin.

The enzyme catalyses nitrite + NAD(+) + H2O = nitrate + NADH + H(+). In terms of biological role, nitrate reductase is a key enzyme involved in the first step of nitrate assimilation in plants, fungi and bacteria. This is Nitrate reductase [NADH] (NIA) from Lotus tetragonolobus (Winged pea).